The chain runs to 355 residues: F-box only protein 32 (355 aa).

The Nuclear localization signal motif lies at 62 to 67 (KKRKKD). Positions 169 to 173 (LLQTL) match the Nuclear export signal motif. In terms of domain architecture, F-box spans 223-271 (LTFTDLPLCLQLNIMQRLSDGRDLVSLGQAAPDLHVLSEDRLLWKKLCQ). A Bipartite nuclear localization signal motif is present at residues 280–295 (RKRLILSDKGQLDWKK).

In terms of assembly, part of the SCF (SKP1-CUL1-F-box) E3 ubiquitin-protein ligase complex SCF(FBXO32) formed of CUL1, SKP1, RBX1 and FBXO32. In terms of tissue distribution, specifically expressed in cardiac and skeletal muscle.

The protein resides in the cytoplasm. It is found in the nucleus. It functions in the pathway protein modification; protein ubiquitination. Substrate recognition component of a SCF (SKP1-CUL1-F-box protein) E3 ubiquitin-protein ligase complex which mediates the ubiquitination and subsequent proteasomal degradation of target proteins. Probably recognizes and binds to phosphorylated target proteins during skeletal muscle atrophy. Recognizes TERF1. In Homo sapiens (Human), this protein is F-box only protein 32 (FBXO32).